We begin with the raw amino-acid sequence, 176 residues long: Small ribosomal subunit protein uS5 (176 aa).

The 64-residue stretch at 18-81 folds into the S5 DRBM domain; the sequence is FEEKMLFVNR…SIARKNMISV (64 aa).

The protein belongs to the universal ribosomal protein uS5 family. Part of the 30S ribosomal subunit. Contacts proteins S4 and S8.

Its function is as follows. With S4 and S12 plays an important role in translational accuracy. Functionally, located at the back of the 30S subunit body where it stabilizes the conformation of the head with respect to the body. This Deinococcus deserti (strain DSM 17065 / CIP 109153 / LMG 22923 / VCD115) protein is Small ribosomal subunit protein uS5.